Reading from the N-terminus, the 209-residue chain is Large ribosomal subunit protein bL25 (209 aa).

Belongs to the bacterial ribosomal protein bL25 family. CTC subfamily. Part of the 50S ribosomal subunit; part of the 5S rRNA/L5/L18/L25 subcomplex. Contacts the 5S rRNA. Binds to the 5S rRNA independently of L5 and L18.

In terms of biological role, this is one of the proteins that binds to the 5S RNA in the ribosome where it forms part of the central protuberance. The sequence is that of Large ribosomal subunit protein bL25 from Xanthomonas campestris pv. campestris (strain 8004).